We begin with the raw amino-acid sequence, 296 residues long: Aspartate carbamoyltransferase catalytic subunit (296 aa).

Carbamoyl phosphate is bound by residues Arg50 and Thr51. Position 79 (Lys79) interacts with L-aspartate. Residues Arg100, His128, and Gln131 each contribute to the carbamoyl phosphate site. Residues Arg161 and Arg219 each contribute to the L-aspartate site. Carbamoyl phosphate is bound by residues Leu258 and Pro259.

The protein belongs to the aspartate/ornithine carbamoyltransferase superfamily. ATCase family. Heterooligomer of catalytic and regulatory chains.

It carries out the reaction carbamoyl phosphate + L-aspartate = N-carbamoyl-L-aspartate + phosphate + H(+). It participates in pyrimidine metabolism; UMP biosynthesis via de novo pathway; (S)-dihydroorotate from bicarbonate: step 2/3. Its function is as follows. Catalyzes the condensation of carbamoyl phosphate and aspartate to form carbamoyl aspartate and inorganic phosphate, the committed step in the de novo pyrimidine nucleotide biosynthesis pathway. The polypeptide is Aspartate carbamoyltransferase catalytic subunit (Korarchaeum cryptofilum (strain OPF8)).